A 445-amino-acid polypeptide reads, in one-letter code: Tubulin alpha-1 chain (445 aa).

Glutamine 11 contacts GTP. At lysine 40 the chain carries N6-acetyllysine. The GTP site is built by glutamate 71, serine 140, glycine 144, threonine 145, threonine 179, asparagine 206, and asparagine 228. Glutamate 71 lines the Mg(2+) pocket. Glutamate 254 is an active-site residue.

The protein belongs to the tubulin family. As to quaternary structure, dimer of alpha and beta chains. A typical microtubule is a hollow water-filled tube with an outer diameter of 25 nm and an inner diameter of 15 nM. Alpha-beta heterodimers associate head-to-tail to form protofilaments running lengthwise along the microtubule wall with the beta-tubulin subunit facing the microtubule plus end conferring a structural polarity. Microtubules usually have 13 protofilaments but different protofilament numbers can be found in some organisms and specialized cells. Requires Mg(2+) as cofactor. Post-translationally, acetylation of alpha chains at Lys-40 stabilizes microtubules and affects affinity and processivity of microtubule motors. This modification has a role in multiple cellular functions, ranging from cell motility, cell cycle progression or cell differentiation to intracellular trafficking and signaling.

Its subcellular location is the cytoplasm. It localises to the cytoskeleton. It catalyses the reaction GTP + H2O = GDP + phosphate + H(+). Functionally, tubulin is the major constituent of microtubules, a cylinder consisting of laterally associated linear protofilaments composed of alpha- and beta-tubulin heterodimers. Microtubules grow by the addition of GTP-tubulin dimers to the microtubule end, where a stabilizing cap forms. Below the cap, tubulin dimers are in GDP-bound state, owing to GTPase activity of alpha-tubulin. This is Tubulin alpha-1 chain from Stylonychia lemnae (Ciliate).